Here is a 1168-residue protein sequence, read N- to C-terminus: Transcription-repair-coupling factor (1168 aa).

Residues 633-794 enclose the Helicase ATP-binding domain; the sequence is DMQKSRPMDR…MLGVRDLSVI (162 aa). 646–653 provides a ligand contact to ATP; the sequence is GDVGYGKT. Positions 747–750 match the DEEQ box motif; that stretch reads DEEQ. One can recognise a Helicase C-terminal domain in the interval 808-969; that stretch reads VLEQNMSFIK…GFKIAMRDLN (162 aa).

This sequence in the N-terminal section; belongs to the UvrB family. The protein in the C-terminal section; belongs to the helicase family. RecG subfamily.

Its subcellular location is the cytoplasm. Its function is as follows. Couples transcription and DNA repair by recognizing RNA polymerase (RNAP) stalled at DNA lesions. Mediates ATP-dependent release of RNAP and its truncated transcript from the DNA, and recruitment of nucleotide excision repair machinery to the damaged site. In Staphylococcus aureus (strain USA300), this protein is Transcription-repair-coupling factor.